A 160-amino-acid polypeptide reads, in one-letter code: Transcriptional repressor NrdR (160 aa).

The segment covering 1 to 11 (MRCPNCNSLDT) has biased composition (polar residues). A disordered region spans residues 1–20 (MRCPNCNSLDTQVKDSRPTE). The segment at 3-34 (CPNCNSLDTQVKDSRPTEDSSVIRRRRVCIAC) is a zinc-finger region. One can recognise an ATP-cone domain in the interval 49–139 (LTVIKRNGRR…VYRNFREAKD (91 aa)).

This sequence belongs to the NrdR family. Zn(2+) serves as cofactor.

Functionally, negatively regulates transcription of bacterial ribonucleotide reductase nrd genes and operons by binding to NrdR-boxes. The polypeptide is Transcriptional repressor NrdR (Rhodopseudomonas palustris (strain HaA2)).